A 325-amino-acid polypeptide reads, in one-letter code: Protein FAM50B (325 aa).

At alanine 2 the chain carries N-acetylalanine. 2 disordered regions span residues 92–111 (QHLEEQRLQQERQREQEQRR) and 137–160 (RRAGNLGKNPDVDTSFLPDRDREE).

It belongs to the FAM50 family. Widely expressed. Mostly abundant in testis and adult and fetal brain.

This Homo sapiens (Human) protein is Protein FAM50B (FAM50B).